The chain runs to 1333 residues: Protein CLASP-1 (1333 aa).

Residues Leu168–Ile206 form an HEAT 1 repeat. Positions Ser269–Ala305 are enriched in low complexity. A disordered region spans residues Ser269 to Asp311. The stretch at Ser360–Leu389 forms a coiled coil. 2 disordered regions span residues Gln579–Pro711 and Thr764–Asn792. Residues Asn601 to Asn611 show a composition bias toward low complexity. Residues Ile612 to Arg644 are compositionally biased toward polar residues. 2 stretches are compositionally biased toward low complexity: residues Ser657 to Ser669 and Thr686 to Thr707. One copy of the HEAT 2 repeat lies at Val1266 to His1304.

Belongs to the CLASP family.

Its subcellular location is the cytoplasm. It localises to the cytoskeleton. Its function is as follows. Microtubule plus-end tracking protein that promotes the stabilization of dynamic microtubules. The protein is Protein CLASP-1 of Caenorhabditis briggsae.